Consider the following 708-residue polypeptide: Pre-mRNA-splicing factor SPP382 (708 aa).

One can recognise a G-patch domain in the interval 61–108 (TYGIGAKLLSSMGYVAGKGLGKDGSGITTPIETQSRPMHNAGLGMFSN).

As to quaternary structure, component of the NTR complex (NTC-related complex), composed of NTR1, NTR2 and PRP43. Interacts with CLF1 and NTR2. Interacts with PRP43 and PRP45.

Its subcellular location is the cytoplasm. It localises to the nucleus. In terms of biological role, involved in pre-mRNA splicing and spliceosome disassembly. Promotes release of excised lariat intron from the spliceosome by acting as a receptor for PRP43. This targeting of PRP43 leads to disassembly of the spliceosome with the separation of the U2, U5, U6 snRNPs and the NTC complex. This Saccharomyces cerevisiae (strain ATCC 204508 / S288c) (Baker's yeast) protein is Pre-mRNA-splicing factor SPP382 (SPP382).